Reading from the N-terminus, the 619-residue chain is Zinc finger and BTB domain-containing protein 7C (619 aa).

A BTB domain is found at cysteine 34 to alanine 101. Residues proline 129–histidine 218 are disordered. Residues glycine 133–aspartate 173 are compositionally biased toward acidic residues. Residues lysine 191–proline 208 show a composition bias toward basic and acidic residues. C2H2-type zinc fingers lie at residues glutamine 364–histidine 386, tyrosine 392–histidine 414, and tyrosine 420–histidine 442. The C2H2-type 4; degenerate zinc finger occupies tyrosine 448–arginine 478.

As to expression, detected in normal cervical keratinocytes, and in some cervical carcinoma cell lines.

Its function is as follows. May be a tumor suppressor gene. This chain is Zinc finger and BTB domain-containing protein 7C (ZBTB7C), found in Homo sapiens (Human).